The sequence spans 497 residues: 4,4'-diapolycopene oxygenase (497 aa).

It belongs to the carotenoid/retinoid oxidoreductase family. FAD serves as cofactor.

The catalysed reaction is all-trans-4,4'-diapolycopene + 4 AH2 + 4 O2 = all-trans-4,4'-diapolycopene-4,4'-dial + 4 A + 6 H2O. The enzyme catalyses all-trans-4,4'-diaponeurosporene + 2 AH2 + 2 O2 = 4,4'-diaponeurosporenal + 2 A + 3 H2O. The protein operates within carotenoid biosynthesis. In terms of biological role, involved in the biosynthesis of C30 carotenoids. Catalyzes the oxidation of the terminal methyl side groups of 4,4'-diapolycopene to yield 4,4'-diapolycopen-4,4'-dial via the aldehyde intermediate 4,4'-diapolycopen-al. Also able to catalyze the oxidation of the terminal methyl side group of 4,4'-diaponeurosporene to form 4,4'-diaponeurosporen-4-al. It has moderate to low activity on the C40 substrates neurosporene and lycopene, and has no detectable activity on zeta-carotene or beta-carotene. This is 4,4'-diapolycopene oxygenase from Methylomonas sp.